The sequence spans 157 residues: Methylglyoxal synthase (157 aa).

Residues 1–157 (MSKVKNIAVV…DFSSYTQRKL (157 aa)) enclose the MGS-like domain. Substrate-binding positions include histidine 12, lysine 16, 38-41 (TGTT), and 71-72 (SG). Aspartate 77 serves as the catalytic Proton donor/acceptor. Substrate is bound at residue histidine 104.

The protein belongs to the methylglyoxal synthase family.

It catalyses the reaction dihydroxyacetone phosphate = methylglyoxal + phosphate. Catalyzes the formation of methylglyoxal from dihydroxyacetone phosphate. The protein is Methylglyoxal synthase of Maridesulfovibrio salexigens (strain ATCC 14822 / DSM 2638 / NCIMB 8403 / VKM B-1763) (Desulfovibrio salexigens).